The sequence spans 52 residues: Mating pheromone En-1 (52 aa).

4 disulfide bridges follow: C11-C37, C23-C33, C30-C52, and C34-C46.

Its subcellular location is the secreted. Functionally, mating ciliate pheromones (or gamones) are diffusible extracellular communication signals that distinguish different intraspecific classes of cells commonly referred to as 'mating types'. They prepare the latter for conjugation by changing their cell surface properties. The chain is Mating pheromone En-1 from Euplotes nobilii (Ciliate).